Here is a 343-residue protein sequence, read N- to C-terminus: Protein RecA (343 aa).

65 to 72 (GPESSGKT) provides a ligand contact to ATP.

Belongs to the RecA family.

It localises to the cytoplasm. Can catalyze the hydrolysis of ATP in the presence of single-stranded DNA, the ATP-dependent uptake of single-stranded DNA by duplex DNA, and the ATP-dependent hybridization of homologous single-stranded DNAs. It interacts with LexA causing its activation and leading to its autocatalytic cleavage. The polypeptide is Protein RecA (Campylobacter jejuni subsp. doylei (strain ATCC BAA-1458 / RM4099 / 269.97)).